Reading from the N-terminus, the 240-residue chain is Mannose-binding protein C (240 aa).

An N-terminal signal peptide occupies residues 1–18 (MSLFPSLHLLLLIVMTAS). Collagen-like domains lie at 39–61 (SPGINGLPGKDGLDGAKGEKGEP) and 67–97 (GLQGLPGMVGPQGSPGIPGLPGLKGQKGDSG). Pro46 is modified (hydroxyproline). Positions 48 to 102 (KDGLDGAKGEKGEPGQGLIGLQGLPGMVGPQGSPGIPGLPGLKGQKGDSGIDPGN) are disordered. The span at 49-60 (DGLDGAKGEKGE) shows a compositional bias: basic and acidic residues. 3 positions are modified to hydroxyproline: Pro72, Pro81, and Pro87. A coiled-coil region spans residues 104–122 (LANLRSELDNIKKWLIFAQ). The 112-residue stretch at 126–237 (VGKKLYLTNG…CSSQLSAVCE (112 aa)) folds into the C-type lectin domain. 2 cysteine pairs are disulfide-bonded: Cys147-Cys236 and Cys214-Cys228.

As to quaternary structure, interacts with MASP1 and MASP2. Interacts with MEP1A and MEP1B and may inhibit their catalytic activity. Forms oligomeric complexes of 2 or 3 homotrimers. In terms of tissue distribution, expressed in liver. Weakly expressed in kidney and testis.

It localises to the secreted. Functionally, calcium-dependent lectin involved in innate immune defense. Binds mannose, fucose and N-acetylglucosamine on different microorganisms and activates the lectin complement pathway. Binds to late apoptotic cells, as well as to apoptotic blebs and to necrotic cells, but not to early apoptotic cells, facilitating their uptake by macrophages. According to some authors, it only binds mannose. The protein is Mannose-binding protein C of Sus scrofa (Pig).